The chain runs to 660 residues: Bifunctional polymyxin resistance protein ArnA (660 aa).

Residues 1-304 (MKTVVFAYHD…TLGLVQGSRL (304 aa)) form a formyltransferase ArnAFT region. 86 to 88 (HLI) contributes to the (6R)-10-formyltetrahydrofolate binding site. H104 functions as the Proton donor; for formyltransferase activity in the catalytic mechanism. (6R)-10-formyltetrahydrofolate contacts are provided by residues R114 and 136 to 140 (VKRAD). Residues 314-660 (RRTRVLILGV…RTVDLTDKPS (347 aa)) form a dehydrogenase ArnADH region. Residues D347 and 368-369 (DI) each bind NAD(+). UDP-alpha-D-glucuronate is bound by residues A393, Y398, and 432 to 433 (TS). E434 serves as the catalytic Proton acceptor; for decarboxylase activity. UDP-alpha-D-glucuronate contacts are provided by residues R460, N492, 526–535 (KLIDGGKQKR), and Y613. The active-site Proton donor; for decarboxylase activity is R619.

The protein in the N-terminal section; belongs to the Fmt family. UDP-L-Ara4N formyltransferase subfamily. This sequence in the C-terminal section; belongs to the NAD(P)-dependent epimerase/dehydratase family. UDP-glucuronic acid decarboxylase subfamily. In terms of assembly, homohexamer, formed by a dimer of trimers.

The catalysed reaction is UDP-alpha-D-glucuronate + NAD(+) = UDP-beta-L-threo-pentopyranos-4-ulose + CO2 + NADH. It carries out the reaction UDP-4-amino-4-deoxy-beta-L-arabinose + (6R)-10-formyltetrahydrofolate = UDP-4-deoxy-4-formamido-beta-L-arabinose + (6S)-5,6,7,8-tetrahydrofolate + H(+). It functions in the pathway nucleotide-sugar biosynthesis; UDP-4-deoxy-4-formamido-beta-L-arabinose biosynthesis; UDP-4-deoxy-4-formamido-beta-L-arabinose from UDP-alpha-D-glucuronate: step 1/3. It participates in nucleotide-sugar biosynthesis; UDP-4-deoxy-4-formamido-beta-L-arabinose biosynthesis; UDP-4-deoxy-4-formamido-beta-L-arabinose from UDP-alpha-D-glucuronate: step 3/3. Its pathway is bacterial outer membrane biogenesis; lipopolysaccharide biosynthesis. Its function is as follows. Bifunctional enzyme that catalyzes the oxidative decarboxylation of UDP-glucuronic acid (UDP-GlcUA) to UDP-4-keto-arabinose (UDP-Ara4O) and the addition of a formyl group to UDP-4-amino-4-deoxy-L-arabinose (UDP-L-Ara4N) to form UDP-L-4-formamido-arabinose (UDP-L-Ara4FN). The modified arabinose is attached to lipid A and is required for resistance to polymyxin and cationic antimicrobial peptides. The protein is Bifunctional polymyxin resistance protein ArnA of Escherichia coli O127:H6 (strain E2348/69 / EPEC).